Consider the following 192-residue polypeptide: CASP-like protein 1E1 (192 aa).

A disordered region spans residues 1–22 (MDSQNKNSVDAMDGIESRGMKE). Topologically, residues 1–29 (MDSQNKNSVDAMDGIESRGMKERGGRTNS) are cytoplasmic. Residues 30 to 50 (FLVLRVLAFVLTSTAAIVHGV) traverse the membrane as a helical segment. Residues 51-81 (NNQTETVPIQLTSSMPPLYVPVVAKWHYLSA) lie on the Extracellular side of the membrane. Residue asparagine 52 is glycosylated (N-linked (GlcNAc...) asparagine). The helical transmembrane segment at 82–102 (FVFFVVSNAIACSYAAISVML) threads the bilayer. Residues 103 to 118 (SFCGKKSMVPIILTLD) lie on the Cytoplasmic side of the membrane. A helical membrane pass occupies residues 119 to 139 (LLMVALLFSSNGAATAIGVMG). Residues 140–161 (YKGNSHVKWNKVCNVFGKFCNQ) are Extracellular-facing. The helical transmembrane segment at 162-182 (VAASVVLSLIGSIVFVLLVML) threads the bilayer. Residues 183–192 (TAFRLHNKSK) lie on the Cytoplasmic side of the membrane.

This sequence belongs to the Casparian strip membrane proteins (CASP) family. Homodimer and heterodimers.

It localises to the cell membrane. This chain is CASP-like protein 1E1, found in Ricinus communis (Castor bean).